The chain runs to 134 residues: ATP synthase epsilon chain (134 aa).

It belongs to the ATPase epsilon chain family. In terms of assembly, F-type ATPases have 2 components, CF(1) - the catalytic core - and CF(0) - the membrane proton channel. CF(1) has five subunits: alpha(3), beta(3), gamma(1), delta(1), epsilon(1). CF(0) has three main subunits: a, b and c.

The protein resides in the cell membrane. Its function is as follows. Produces ATP from ADP in the presence of a proton gradient across the membrane. In Clostridium botulinum (strain Alaska E43 / Type E3), this protein is ATP synthase epsilon chain.